Reading from the N-terminus, the 148-residue chain is Prefoldin subunit alpha (148 aa).

This sequence belongs to the prefoldin subunit alpha family. Heterohexamer of two alpha and four beta subunits.

It is found in the cytoplasm. In terms of biological role, molecular chaperone capable of stabilizing a range of proteins. Seems to fulfill an ATP-independent, HSP70-like function in archaeal de novo protein folding. This chain is Prefoldin subunit alpha (pfdA), found in Pyrococcus horikoshii (strain ATCC 700860 / DSM 12428 / JCM 9974 / NBRC 100139 / OT-3).